A 179-amino-acid polypeptide reads, in one-letter code: Large ribosomal subunit protein uL5 (179 aa).

It belongs to the universal ribosomal protein uL5 family. Part of the 50S ribosomal subunit; part of the 5S rRNA/L5/L18/L25 subcomplex. Contacts the 5S rRNA and the P site tRNA. Forms a bridge to the 30S subunit in the 70S ribosome.

In terms of biological role, this is one of the proteins that bind and probably mediate the attachment of the 5S RNA into the large ribosomal subunit, where it forms part of the central protuberance. In the 70S ribosome it contacts protein S13 of the 30S subunit (bridge B1b), connecting the 2 subunits; this bridge is implicated in subunit movement. Contacts the P site tRNA; the 5S rRNA and some of its associated proteins might help stabilize positioning of ribosome-bound tRNAs. The chain is Large ribosomal subunit protein uL5 from Idiomarina loihiensis (strain ATCC BAA-735 / DSM 15497 / L2-TR).